A 1079-amino-acid chain; its full sequence is DNA-directed RNA polymerase subunit beta (1079 aa).

Residues 963-982 (RSTGPYSRVTQQPVKGRARR) are disordered. Residues 966–975 (GPYSRVTQQP) are compositionally biased toward polar residues.

This sequence belongs to the RNA polymerase beta chain family. In plastids the minimal PEP RNA polymerase catalytic core is composed of four subunits: alpha, beta, beta', and beta''. When a (nuclear-encoded) sigma factor is associated with the core the holoenzyme is formed, which can initiate transcription.

It is found in the plastid. The protein resides in the chloroplast. The enzyme catalyses RNA(n) + a ribonucleoside 5'-triphosphate = RNA(n+1) + diphosphate. In terms of biological role, DNA-dependent RNA polymerase catalyzes the transcription of DNA into RNA using the four ribonucleoside triphosphates as substrates. This Pelargonium hortorum (Common geranium) protein is DNA-directed RNA polymerase subunit beta.